The sequence spans 577 residues: Mitochondrial-processing peptidase subunit alpha (577 aa).

The transit peptide at 1 to 35 directs the protein to the mitochondrion; sequence MLNRFRPARLVAQSSRCLPLTRARAGPLPVNNART. Residues 259-301 form a disordered region; the sequence is SDAPGLSRTGSETSVDSLVSESSEASSESSSSSSDSSESSGGL. Residues 269–301 are compositionally biased toward low complexity; that stretch reads SETSVDSLVSESSEASSESSSSSSDSSESSGGL.

It belongs to the peptidase M16 family. Heterodimer of mpp (alpha) and pep (beta) subunits, forming the mitochondrial processing protease (MPP) in which mpp is involved in substrate recognition and binding and pep is the catalytic subunit.

The protein localises to the mitochondrion matrix. Functionally, substrate recognition and binding subunit of the essential mitochondrial processing protease (MPP), which cleaves the mitochondrial sequence off newly imported precursors proteins. The chain is Mitochondrial-processing peptidase subunit alpha from Neurospora crassa (strain ATCC 24698 / 74-OR23-1A / CBS 708.71 / DSM 1257 / FGSC 987).